A 1210-amino-acid chain; its full sequence is A disintegrin and metalloproteinase with thrombospondin motifs 19 (1210 aa).

The signal sequence occupies residues 1 to 30 (MGPEMRLTRICCCCCLLYQLGFLSHGTTSG). Positions 31–319 (LQLTPDLEEW…KIADNRREKR (289 aa)) are excised as a propeptide. N-linked (GlcNAc...) asparagine glycosylation occurs at asparagine 54. Residues 55–166 (ATGLSGGSSD…PAQQEEPSAE (112 aa)) are disordered. A compositionally biased stretch (gly residues) spans 69–78 (RSSGGGGRGQ). A compositionally biased stretch (basic and acidic residues) spans 84–98 (REVRSVARAPQEEAT). Acidic residues predominate over residues 113–122 (GAEDEEELES). A compositionally biased stretch (polar residues) spans 130–139 (SGDTALSSGT). Over residues 143 to 158 (WQPPLPPQRPSSPPPA) the composition is skewed to pro residues. N-linked (GlcNAc...) asparagine glycosylation occurs at asparagine 263. Positions 295–302 (HHCGVISD) match the Cysteine switch motif. Cysteine 297 contacts Zn(2+). The Peptidase M12B domain occupies 328–548 (YNIETVVVAD…KASSCLLHTD (221 aa)). Disulfide bonds link cysteine 404–cysteine 469, cysteine 444–cysteine 451, cysteine 463–cysteine 543, cysteine 502–cysteine 527, cysteine 572–cysteine 596, cysteine 583–cysteine 604, cysteine 591–cysteine 623, cysteine 617–cysteine 628, cysteine 648–cysteine 683, cysteine 652–cysteine 688, and cysteine 663–cysteine 673. Histidine 485 serves as a coordination point for Zn(2+). Residue glutamate 486 is part of the active site. Histidine 489 and histidine 495 together coordinate Zn(2+). The region spanning 549–636 (PQSLSSVLVP…ECTRRTPAPE (88 aa)) is the Disintegrin domain. The region spanning 637–689 (HLAGEWSPWSSCSRSCSSGVSSRERKCPGLGSEARDCNGPRKQYRICENPPCP) is the TSP type-1 1 domain. Residues 794–917 (VIKGDFNHTR…PDNQSSKEPG (124 aa)) are spacer. Asparagine 800, asparagine 910, asparagine 931, asparagine 952, and asparagine 1012 each carry an N-linked (GlcNAc...) asparagine glycan. TSP type-1 domains lie at 918 to 978 (PLFM…NEQP), 979 to 1040 (CQTR…QDCM), 1042 to 1086 (VWEA…EDCE), and 1090 to 1147 (KCYV…QPCN). 3 cysteine pairs are disulfide-bonded: cysteine 991–cysteine 1034, cysteine 995–cysteine 1039, and cysteine 1006–cysteine 1023. Residues 1163-1202 (LTFKCLGDQWPVYCRVIREKNLCQDMRWYQRCCETCRDFY) form the PLAC domain.

Zn(2+) serves as cofactor. In terms of processing, the precursor is cleaved by a furin endopeptidase. Post-translationally, glycosylated. Can be O-fucosylated by POFUT2 on a serine or a threonine residue found within the consensus sequence C1-X(2)-(S/T)-C2-G of the TSP type-1 repeat domains where C1 and C2 are the first and second cysteine residue of the repeat, respectively. Fucosylated repeats can then be further glycosylated by the addition of a beta-1,3-glucose residue by the glucosyltransferase, B3GALTL. Fucosylation mediates the efficient secretion of ADAMTS family members. Can also be C-glycosylated with one or two mannose molecules on tryptophan residues within the consensus sequence W-X-X-W of the TPRs, and N-glycosylated. These other glycosylations can also facilitate secretion. Expressed predominantly in fetal ovary, low levels of expression is also detected in kidney, heart, skeletal muscle, lung and testis.

It is found in the secreted. The protein localises to the extracellular space. Its subcellular location is the extracellular matrix. This is A disintegrin and metalloproteinase with thrombospondin motifs 19 (Adamts19) from Mus musculus (Mouse).